A 342-amino-acid polypeptide reads, in one-letter code: Ribosomal RNA small subunit methyltransferase C (342 aa).

The protein belongs to the methyltransferase superfamily. RsmC family. As to quaternary structure, monomer.

The protein resides in the cytoplasm. It carries out the reaction guanosine(1207) in 16S rRNA + S-adenosyl-L-methionine = N(2)-methylguanosine(1207) in 16S rRNA + S-adenosyl-L-homocysteine + H(+). Its function is as follows. Specifically methylates the guanine in position 1207 of 16S rRNA in the 30S particle. The chain is Ribosomal RNA small subunit methyltransferase C from Shewanella oneidensis (strain ATCC 700550 / JCM 31522 / CIP 106686 / LMG 19005 / NCIMB 14063 / MR-1).